The chain runs to 257 residues: uncharacterized protein (257 aa).

A helical transmembrane segment spans residues 6–26 (IFWLNLAAIIIISIVVSGGMF).

The protein belongs to the staphylococcal tandem lipoprotein family.

It localises to the cell membrane. This is an uncharacterized protein from Staphylococcus aureus (strain Mu50 / ATCC 700699).